The sequence spans 189 residues: Protein C1orf43 homolog (189 aa).

A helical transmembrane segment spans residues 11-31 (VNVVLVMAYGSLVFVLLFIFV).

It localises to the membrane. The protein resides in the golgi apparatus. It is found in the mitochondrion. In terms of biological role, general regulator of phagocytosis. Required to uptake Gram negative bacterium by macrophages. This chain is Protein C1orf43 homolog, found in Pongo abelii (Sumatran orangutan).